The primary structure comprises 229 residues: Ribonuclease 3 (229 aa).

The RNase III domain maps to 4-133 (WEELQESVGF…FIGALYLDNG (130 aa)). A Mg(2+)-binding site is contributed by Glu46. Residue Asp50 is part of the active site. Mg(2+) is bound by residues Asp119 and Glu122. Glu122 is an active-site residue. The DRBM domain occupies 159–228 (DYKTQLQEIV…AQFAINQLTH (70 aa)).

This sequence belongs to the ribonuclease III family. As to quaternary structure, homodimer. Mg(2+) is required as a cofactor.

It localises to the cytoplasm. It catalyses the reaction Endonucleolytic cleavage to 5'-phosphomonoester.. In terms of biological role, digests double-stranded RNA. Involved in the processing of primary rRNA transcript to yield the immediate precursors to the large and small rRNAs (23S and 16S). Processes some mRNAs, and tRNAs when they are encoded in the rRNA operon. Processes pre-crRNA and tracrRNA of type II CRISPR loci if present in the organism. The polypeptide is Ribonuclease 3 (Listeria welshimeri serovar 6b (strain ATCC 35897 / DSM 20650 / CCUG 15529 / CIP 8149 / NCTC 11857 / SLCC 5334 / V8)).